The chain runs to 89 residues: uncharacterized protein (89 aa).

The first 19 residues, 1–19 (MIVRTLLIAAALLGGTAQA), serve as a signal peptide directing secretion.

The protein resides in the secreted. This is an uncharacterized protein from Pseudomonas aeruginosa (strain UCBPP-PA14).